The chain runs to 323 residues: Putative HTH-type transcriptional regulatory protein Mbur_1811 (323 aa).

An HTH cro/C1-type domain is found at 132–190 (LKEARMNVSMSLGALASELGVSRRTISKYEEGQMDASIDIVLHLEEILDMALAKSIDIL). The H-T-H motif DNA-binding region spans 143–162 (LGALASELGVSRRTISKYEE).

The polypeptide is Putative HTH-type transcriptional regulatory protein Mbur_1811 (Methanococcoides burtonii (strain DSM 6242 / NBRC 107633 / OCM 468 / ACE-M)).